We begin with the raw amino-acid sequence, 1370 residues long: Zinc finger MYM-type protein 3 (1370 aa).

3 stretches are compositionally biased toward low complexity: residues 1–12 (MDPSDFPSPFDP), 40–56 (APSR…SSGA), and 130–146 (GAGA…EPLA). 2 disordered regions span residues 1–73 (MDPS…PGGV) and 85–310 (GLLY…MGTK). Residues 227 to 255 (TGKEIEKPPERVQKRSERVRRAEPPKPEV) show a composition bias toward basic and acidic residues. Phosphoserine is present on residues Ser265 and Ser269. A compositionally biased stretch (acidic residues) spans 265–281 (SDEDSDAMVDDPNDEDF). Glycyl lysine isopeptide (Lys-Gly) (interchain with G-Cter in SUMO2) cross-links involve residues Lys310, Lys322, and Lys330. 9 MYM-type zinc fingers span residues 334–368 (QLFC…TKDS), 380–424 (HEFC…LHEV), 431–466 (HRLC…RPGG), 479–513 (KRFC…FEML), 523–561 (SLFC…PCYY), 569–606 (YQFC…KPEV), 614–648 (FQFC…HEKL), 655–694 (KSFC…GVTE), and 701–735 (WDFC…LETI). Over residues 761–789 (NLDTQSGPESLLNSQSSESKPQTPSQTKV) the composition is skewed to polar residues. Residues 761–831 (NLDTQSGPES…PPPPATPRKN (71 aa)) form a disordered region. Glycyl lysine isopeptide (Lys-Gly) (interchain with G-Cter in SUMO2) cross-links involve residues Lys780 and Lys788. Residues 790 to 799 (ENNHTVRTPD) show a composition bias toward basic and acidic residues. Position 797 is a phosphothreonine (Thr797). Lys806 is covalently cross-linked (Glycyl lysine isopeptide (Lys-Gly) (interchain with G-Cter in SUMO2)). The segment covering 816-827 (VPTPPPPPPPAT) has biased composition (pro residues). Residues Thr818 and Thr827 each carry the phosphothreonine modification. Residues Lys848, Lys862, Lys921, and Lys1276 each participate in a glycyl lysine isopeptide (Lys-Gly) (interchain with G-Cter in SUMO2) cross-link.

In terms of assembly, may be a component of a BHC histone deacetylase complex that contains HDAC1, HDAC2, HMG20B/BRAF35, KDM1A, RCOR1/CoREST, PHF21A/BHC80, ZMYM2, ZNF217, ZMYM3, GSE1 and GTF2I. In terms of tissue distribution, ubiquitously expressed in all embryonic stages and adult tissues.

It localises to the nucleus. Plays a role in the regulation of cell morphology and cytoskeletal organization. This is Zinc finger MYM-type protein 3 (Zmym3) from Mus musculus (Mouse).